We begin with the raw amino-acid sequence, 467 residues long: E3 ubiquitin-protein ligase IE61 (467 aa).

The segment at 19 to 58 adopts an RING-type zinc-finger fold; it reads CTICMSTVSDLGKTMPCLHDFCFVCIRAWTSTSVQCPLCR. Disordered regions lie at residues 101–171, 205–238, 344–364, and 413–467; these read GDVI…GVTK, QQPR…FRAT, IVRP…RDTR, and DSAC…MKKS. Positions 116–143 are enriched in polar residues; sequence ESIQQPTSRSSREPIQSPNPGPLQSSAR. Low complexity predominate over residues 149-161; it reads SPSDSQQDSIQPP. The span at 162-171 shows a compositional bias: polar residues; it reads TRDSSPGVTK. The span at 228 to 238 shows a compositional bias: basic and acidic residues; sequence RTMDRLPFRAT. 2 stretches are compositionally biased toward low complexity: residues 429-443 and 450-459; these read GESN…TSGS and KSSAGKAGKG.

As to quaternary structure, interacts with host BTRC; this interaction seems to inactivate SCF-mediated protein degradation in general. In terms of processing, auto-ubiquitinated.

It catalyses the reaction S-ubiquitinyl-[E2 ubiquitin-conjugating enzyme]-L-cysteine + [acceptor protein]-L-lysine = [E2 ubiquitin-conjugating enzyme]-L-cysteine + N(6)-ubiquitinyl-[acceptor protein]-L-lysine.. Functionally, RING-finger E3 ubiquitin ligase that degrades host SP100, one of the major components of ND10 nuclear bodies, thereby disrupting the organization of these bodies. Also plays a role in the inhibition of host NF-kappa-B pathway by blocking the SCF(BTRC)-mediated addition of ubiquitin chains to host I-kappa-B-alpha/NFKBIA, thereby interfering with its degradation. In Varicella-zoster virus (strain Dumas) (HHV-3), this protein is E3 ubiquitin-protein ligase IE61 (61).